A 249-amino-acid chain; its full sequence is 5'-nucleotidase SurE (249 aa).

A divalent metal cation-binding residues include D8, D9, S39, and N91.

It belongs to the SurE nucleotidase family. It depends on a divalent metal cation as a cofactor.

It is found in the cytoplasm. The enzyme catalyses a ribonucleoside 5'-phosphate + H2O = a ribonucleoside + phosphate. In terms of biological role, nucleotidase that shows phosphatase activity on nucleoside 5'-monophosphates. The chain is 5'-nucleotidase SurE from Azotobacter vinelandii (strain DJ / ATCC BAA-1303).